The sequence spans 248 residues: NADP-dependent 3-hydroxy acid dehydrogenase YdfG (248 aa).

Residues 7-12 (GATAGF), 32-33 (RR), 54-55 (DV), and Asn-81 each bind NADP(+). Ser-134 contacts substrate. NADP(+)-binding positions include Tyr-147, Lys-151, and 177–185 (PGLVGGTEF). Tyr-147 (proton acceptor) is an active-site residue.

The protein belongs to the short-chain dehydrogenases/reductases (SDR) family. As to quaternary structure, homotetramer.

It catalyses the reaction 3-hydroxypropanoate + NADP(+) = 3-oxopropanoate + NADPH + H(+). It carries out the reaction L-allo-threonine + NADP(+) = aminoacetone + CO2 + NADPH. NADP-dependent dehydrogenase with broad substrate specificity acting on 3-hydroxy acids. Catalyzes the NADP-dependent oxidation of L-allo-threonine to L-2-amino-3-keto-butyrate, which is spontaneously decarboxylated into aminoacetone. Also acts on D-threonine, L-serine, D-serine, D-3-hydroxyisobutyrate, L-3-hydroxyisobutyrate, D-glycerate and L-glycerate. Able to catalyze the reduction of the malonic semialdehyde to 3-hydroxypropionic acid. YdfG is apparently supplementing RutE, the presumed malonic semialdehyde reductase involved in pyrimidine degradation since both are able to detoxify malonic semialdehyde. This is NADP-dependent 3-hydroxy acid dehydrogenase YdfG from Salmonella typhi.